The chain runs to 338 residues: Aspartate-semialdehyde dehydrogenase (338 aa).

NADP(+)-binding positions include T9–V12 and R37–S38. R93 contributes to the phosphate binding site. Catalysis depends on C123, which acts as the Acyl-thioester intermediate. Substrate is bound at residue Q150. S153–G154 lines the NADP(+) pocket. K220 contacts phosphate. Residue R242 participates in substrate binding. H249 serves as the catalytic Proton acceptor. N316 is an NADP(+) binding site.

This sequence belongs to the aspartate-semialdehyde dehydrogenase family. In terms of assembly, homodimer.

It catalyses the reaction L-aspartate 4-semialdehyde + phosphate + NADP(+) = 4-phospho-L-aspartate + NADPH + H(+). Its pathway is amino-acid biosynthesis; L-lysine biosynthesis via DAP pathway; (S)-tetrahydrodipicolinate from L-aspartate: step 2/4. The protein operates within amino-acid biosynthesis; L-methionine biosynthesis via de novo pathway; L-homoserine from L-aspartate: step 2/3. It functions in the pathway amino-acid biosynthesis; L-threonine biosynthesis; L-threonine from L-aspartate: step 2/5. Functionally, catalyzes the NADPH-dependent formation of L-aspartate-semialdehyde (L-ASA) by the reductive dephosphorylation of L-aspartyl-4-phosphate. The sequence is that of Aspartate-semialdehyde dehydrogenase from Streptomyces akiyoshiensis.